The chain runs to 398 residues: Lysophospholipid transporter LplT (398 aa).

The next 11 helical transmembrane spans lie at 19–39 (VIAAQFLSAFGDNALLFATLA), 53–73 (ILQMVFVGAYILFAPFVGQVA), 91–111 (LGAASICFGFNPFVGYTLVGI), 139–159 (LMEASTIAAILLGSVAGGVLA), 164–184 (IAALVACALAYAGAVVANLFI), 227–247 (LFWGAGVTLRFLLVLWVPVAL), 257–277 (YLNAMVAIGIVVGAGAAAKLV), 281–301 (TVARCMPAGILIGVVVLIFSL), 304–324 (ALLPAYALLTLIGVLGGFFVV), 350–370 (GENSAMLLMLGLYSLAVLVGI), and 372–392 (VVAIGIGFGGLFALAIAALWI).

This sequence belongs to the major facilitator superfamily. LplT (TC 2.A.1.42) family.

It is found in the cell inner membrane. In terms of biological role, catalyzes the facilitated diffusion of 2-acyl-glycero-3-phosphoethanolamine (2-acyl-GPE) into the cell. The polypeptide is Lysophospholipid transporter LplT (Citrobacter koseri (strain ATCC BAA-895 / CDC 4225-83 / SGSC4696)).